The following is a 281-amino-acid chain: MSKYSDAKELAGLTLGKKTEYANQYDASLLQPVPRSLNRDDLELGDSLPFLGHDIWTLYELSWLNSKGLPQVAVGEVYIPATSANLIESKSFKLYLNSYNQTRFATWEEVTERLTQDLSACAGEAVLVEVNPVNHYTNQPIVTMEGECIDDQDIEITSYDFNAALLEGAAGDEQVEEILHSHLLKSNCLITNQPDWGSVEIRYQGAKLDREKLLRYLVSFREHNEFHEQCVERIFTDLMKYCQPTKLTVFARYTRRGGLDINPYRSTEQDKPAHNNRMARQ.

87–89 (IES) is a substrate binding site. 89–90 (SK) provides a ligand contact to NADPH. Cys-188 (thioimide intermediate) is an active-site residue. The active-site Proton donor is the Asp-195. Position 227–228 (227–228 (HE)) interacts with substrate. 256 to 257 (RG) contributes to the NADPH binding site. Residues 261–281 (INPYRSTEQDKPAHNNRMARQ) are disordered.

It belongs to the GTP cyclohydrolase I family. QueF type 2 subfamily. In terms of assembly, homodimer.

The protein localises to the cytoplasm. The catalysed reaction is 7-aminomethyl-7-carbaguanine + 2 NADP(+) = 7-cyano-7-deazaguanine + 2 NADPH + 3 H(+). It participates in tRNA modification; tRNA-queuosine biosynthesis. Its function is as follows. Catalyzes the NADPH-dependent reduction of 7-cyano-7-deazaguanine (preQ0) to 7-aminomethyl-7-deazaguanine (preQ1). This Vibrio campbellii (strain ATCC BAA-1116) protein is NADPH-dependent 7-cyano-7-deazaguanine reductase.